Consider the following 48-residue polypeptide: Cytochrome b559 subunit beta (48 aa).

A helical transmembrane segment spans residues 23 to 39 (WLAVHALAIPSVFFLGA). Histidine 27 is a heme binding site.

This sequence belongs to the PsbE/PsbF family. In terms of assembly, heterodimer of an alpha subunit and a beta subunit. PSII is composed of 1 copy each of membrane proteins PsbA, PsbB, PsbC, PsbD, PsbE, PsbF, PsbH, PsbI, PsbJ, PsbK, PsbL, PsbM, PsbT, PsbX, PsbY, Psb30/Ycf12, peripheral proteins PsbO, CyanoQ (PsbQ), PsbU, PsbV and a large number of cofactors. It forms dimeric complexes. Heme b is required as a cofactor.

The protein resides in the cellular thylakoid membrane. Functionally, this b-type cytochrome is tightly associated with the reaction center of photosystem II (PSII). PSII is a light-driven water:plastoquinone oxidoreductase that uses light energy to abstract electrons from H(2)O, generating O(2) and a proton gradient subsequently used for ATP formation. It consists of a core antenna complex that captures photons, and an electron transfer chain that converts photonic excitation into a charge separation. This chain is Cytochrome b559 subunit beta, found in Prochlorococcus marinus (strain MIT 9515).